Reading from the N-terminus, the 739-residue chain is DEAD-box ATP-dependent RNA helicase 32 (739 aa).

The Q motif motif lies at 71–99 (RKFAQLPISDKTKRGLKDAKYVDMTDVQS). Residues 102-277 (IPHALCGRDI…RLSLRDPEYI (176 aa)) form the Helicase ATP-binding domain. Residue 115-122 (ARTGSGKT) coordinates ATP. Positions 225–228 (DEAD) match the DEAD box motif. The Helicase C-terminal domain maps to 303-461 (KLDMLWSFIK…EVSRLLAALL (159 aa)). The stretch at 643–689 (GAEMRKADIEDKKVDKERRREKRMKQKIKRKRGAMEDEEEEEEEDHD) forms a coiled coil. The segment at 656 to 725 (VDKERRREKR…GGKINTDSLS (70 aa)) is disordered. The span at 661–674 (RREKRMKQKIKRKR) shows a compositional bias: basic residues. Acidic residues predominate over residues 678–688 (EDEEEEEEEDH).

It belongs to the DEAD box helicase family. DDX10/DBP4 subfamily.

It carries out the reaction ATP + H2O = ADP + phosphate + H(+). The chain is DEAD-box ATP-dependent RNA helicase 32 (RH32) from Arabidopsis thaliana (Mouse-ear cress).